A 170-amino-acid polypeptide reads, in one-letter code: ATP synthase subunit b (170 aa).

A helical membrane pass occupies residues 15 to 37; the sequence is LNLFETNVLNWAVVVFGLYKFLP.

The protein belongs to the ATPase B chain family. As to quaternary structure, F-type ATPases have 2 components, F(1) - the catalytic core - and F(0) - the membrane proton channel. F(1) has five subunits: alpha(3), beta(3), gamma(1), delta(1), epsilon(1). F(0) has four main subunits: a(1), b(1), b'(1) and c(10-14). The alpha and beta chains form an alternating ring which encloses part of the gamma chain. F(1) is attached to F(0) by a central stalk formed by the gamma and epsilon chains, while a peripheral stalk is formed by the delta, b and b' chains.

It is found in the cellular thylakoid membrane. In terms of biological role, f(1)F(0) ATP synthase produces ATP from ADP in the presence of a proton or sodium gradient. F-type ATPases consist of two structural domains, F(1) containing the extramembraneous catalytic core and F(0) containing the membrane proton channel, linked together by a central stalk and a peripheral stalk. During catalysis, ATP synthesis in the catalytic domain of F(1) is coupled via a rotary mechanism of the central stalk subunits to proton translocation. Component of the F(0) channel, it forms part of the peripheral stalk, linking F(1) to F(0). The chain is ATP synthase subunit b from Prochlorococcus marinus (strain MIT 9515).